The primary structure comprises 266 residues: Outer kinetochore KNL1 complex subunit ZWINT (266 aa).

Residues 95 to 115 are disordered; that stretch reads DQNPDALASEDTSRQKATETK. Basic and acidic residues predominate over residues 105–115; that stretch reads DTSRQKATETK. The stretch at 136–237 forms a coiled coil; it reads LSEALPQVKE…QRNQSYLQLL (102 aa). Phosphoserine is present on residues serine 232 and serine 265.

Component of the KNL1 complex composed of KNL1 and ZWINT. Part of the ten-subunit outer kinetochore KMN network that includes the KNL1, MIS12 and NDC80 complexes; a bioriented kinetochore contains approximately 150 copies of the network. Interacts with the MIS12 complex subunits MIS12 DSN1, and PMF1. Interacts with the NDC80 complex subunit NDC80 during mitosis. Interacts with ZW10. Interacts with CETN3. In terms of tissue distribution, expressed abundantly in brain and at lower levels in testis and kidney.

It localises to the nucleus. The protein localises to the chromosome. The protein resides in the centromere. Its subcellular location is the kinetochore. In terms of biological role, acts as a component of the outer kinetochore KNL1 complex that serves as a docking point for spindle assembly checkpoint components and mediates microtubule-kinetochore interactions. Kinetochores, consisting of a centromere-associated inner segment and a microtubule-contacting outer segment, play a crucial role in chromosome segregation by mediating the physical connection between centromeric DNA and spindle microtubules. The outer kinetochore is made up of the ten-subunit KMN network, comprising the MIS12, NDC80 and KNL1 complexes, and auxiliary microtubule-associated components; together they connect the outer kinetochore with the inner kinetochore, bind microtubules, and mediate interactions with mitotic checkpoint proteins that delay anaphase until chromosomes are bioriented on the spindle. Targets the RZZ complex to the kinetochore at prometaphase. Recruits MAD2L1 to the kinetochore, but is not required for BUB1B localization. In addition to orienting mitotic chromosomes, it is also essential for alignment of homologous chromosomes during meiotic metaphase I. In meiosis I, required to activate the spindle assembly checkpoint at unattached kinetochores to correct erroneous kinetochore-microtubule attachments. The chain is Outer kinetochore KNL1 complex subunit ZWINT (Zwint) from Rattus norvegicus (Rat).